A 549-amino-acid chain; its full sequence is Probable protein kinase UbiB (549 aa).

In terms of domain architecture, Protein kinase spans 123 to 501 (DFNETPLASA…QQQAHKSNYL (379 aa)). Residues 129–137 (LASASISQV) and Lys152 contribute to the ATP site. The active-site Proton acceptor is Asp287. A run of 2 helical transmembrane segments spans residues 498–518 (SNYL…LFNQ) and 520–540 (ATLL…IIGW).

This sequence belongs to the ABC1 family. UbiB subfamily.

It is found in the cell inner membrane. It participates in cofactor biosynthesis; ubiquinone biosynthesis [regulation]. Functionally, is probably a protein kinase regulator of UbiI activity which is involved in aerobic coenzyme Q (ubiquinone) biosynthesis. This is Probable protein kinase UbiB from Shewanella oneidensis (strain ATCC 700550 / JCM 31522 / CIP 106686 / LMG 19005 / NCIMB 14063 / MR-1).